Consider the following 530-residue polypeptide: Ataxin-10 homolog (530 aa).

It belongs to the ataxin-10 family.

It localises to the cytoplasm. Functionally, may play a role in the regulation of cytokinesis. The protein is Ataxin-10 homolog (CTR86) of Candida glabrata (strain ATCC 2001 / BCRC 20586 / JCM 3761 / NBRC 0622 / NRRL Y-65 / CBS 138) (Yeast).